The primary structure comprises 314 residues: Short-chain dehydrogenase/reductase sthC (314 aa).

Residues 1–10 (MAPAETTGNV) show a composition bias toward polar residues. The tract at residues 1 to 27 (MAPAETTGNVQRPEAGKQSMGSFWTQM) is disordered. Residues Val56, Lys80, Asp105, Asn132, and Arg167 each coordinate NADP(+). Ser191 (proton donor) is an active-site residue. Positions 222 and 226 each coordinate NADP(+). Residue Tyr222 is the Proton acceptor of the active site. Lys226 acts as the Lowers pKa of active site Tyr in catalysis.

It belongs to the short-chain dehydrogenases/reductases (SDR) family.

The catalysed reaction is dehydroprobetaenone I + AH2 = probetaenone I + A. It catalyses the reaction betaenone C + AH2 = betaenone B + A. The protein operates within mycotoxin biosynthesis. Short-chain dehydrogenase/reductase; part of the gene cluster that mediates the biosynthesis of the phytotoxin stemphyloxin II. The first step of the pathway is the synthesis of dehydroprobetaenone I by the polyketide synthase sthA and the enoyl reductase sthE via condensation of one acetyl-CoA starter unit with 7 malonyl-CoA units and 5 methylations. The C-terminal reductase (R) domain of sthA catalyzes the reductive release of the polyketide chain. Because sthA lacks a designated enoylreductase (ER) domain, the required activity is provided the enoyl reductase sthE. The short-chain dehydrogenase/reductase sthC then catalyzes reduction of dehydroprobetaenone I to probetaenone I. The cytochrome P450 monooxygenase sthF catalyzes successive epoxidation, oxidation (resulting from epoxide opening) and hydroxylation to install a tertiary alcohol in the decaline ring to yield betaenone C from dehydroprobetaenone I and betaenone B from probetaenone I. The FAD-linked oxidoreductase sthB is responsible for the conversion of betaenone C to betaenone A via an intramolecular aldol reaction between C-1 and C-17 to form the bridged tricyclic system in betaenone A. Finally, the cytochrome P450 monooxygenase sthD catalyzes the hydroxylation of C-15 to afford the final metabolite stemphyloxin II. The chain is Short-chain dehydrogenase/reductase sthC from Phaeosphaeria nodorum (strain SN15 / ATCC MYA-4574 / FGSC 10173) (Glume blotch fungus).